An 846-amino-acid chain; its full sequence is Aminopeptidase N (846 aa).

Substrate-binding positions include Glu120 and 252-256 (GAMEN). His288 contacts Zn(2+). Glu289 serves as the catalytic Proton acceptor. Zn(2+) contacts are provided by His292 and Glu311.

It belongs to the peptidase M1 family. As to quaternary structure, monomer. Requires Zn(2+) as cofactor.

It localises to the cytoplasm. It catalyses the reaction Release of an N-terminal amino acid, Xaa-|-Yaa- from a peptide, amide or arylamide. Xaa is preferably Ala, but may be most amino acids including Pro (slow action). When a terminal hydrophobic residue is followed by a prolyl residue, the two may be released as an intact Xaa-Pro dipeptide.. In terms of biological role, aminopeptidase with broad substrate specificity to several peptides. It has more affinity for oligopeptides than for dipeptides. It plays an essential role in the metabolism, it may be involved in nitrogen supply or protein turnover. The sequence is that of Aminopeptidase N (pepN) from Lactococcus lactis subsp. lactis (strain IL1403) (Streptococcus lactis).